Consider the following 272-residue polypeptide: Protein UL11 (272 aa).

The signal sequence occupies residues 1-31; that stretch reads MLFRYITFHREKVLYLTAACIFGVYISLHDA. Residues 32 to 224 are Extracellular-facing; it reads CIPVVGKIGT…PLQPSPQHQH (193 aa). 4 N-linked (GlcNAc...) asparagine; by host glycosylation sites follow: asparagine 42, asparagine 93, asparagine 100, and asparagine 142. Residues 142–200 form a disordered region; that stretch reads NGTFPTTTTKKPTTTTRTTTTTTQRTTTTRTTTTAKKTTISTTHHKHPSPKKSTTPNSH. The span at 147–183 shows a compositional bias: low complexity; it reads TTTTKKPTTTTRTTTTTTQRTTTTRTTTTAKKTTIST. Residues 225–245 traverse the membrane as a helical segment; sequence LATHALWVLAVVIVIIIIIIF. Over 246–272 the chain is Cytoplasmic; sequence YFRIPQKLWLLWQHDKHGIVLIPQTDL.

This sequence belongs to the RL11 family. In terms of assembly, interacts with host PTPRC; this interaction affects T-cell signaling. Glycosylated.

It is found in the host cell membrane. It localises to the host endoplasmic reticulum. Functionally, plays a role in the modulation of host immune response by modulating T-cell function. Interacts with host PTPRC/CD45 and thereby reduces host TCR signaling and T-cell proliferation. This is Protein UL11 (UL11) from Human cytomegalovirus (strain Merlin) (HHV-5).